The chain runs to 157 residues: Small ribosomal subunit protein uS7 (157 aa).

This sequence belongs to the universal ribosomal protein uS7 family. In terms of assembly, part of the 30S ribosomal subunit. Contacts proteins S9 and S11.

In terms of biological role, one of the primary rRNA binding proteins, it binds directly to 16S rRNA where it nucleates assembly of the head domain of the 30S subunit. Is located at the subunit interface close to the decoding center, probably blocks exit of the E-site tRNA. In Akkermansia muciniphila (strain ATCC BAA-835 / DSM 22959 / JCM 33894 / BCRC 81048 / CCUG 64013 / CIP 107961 / Muc), this protein is Small ribosomal subunit protein uS7.